The following is a 795-amino-acid chain: Protocadherin beta-5 (795 aa).

The first 30 residues, 1–30 (METALAKTPQKRQVMFLAILLLLWEAGSEA), serve as a signal peptide directing secretion. Residues 31–689 (VRYSIPEETE…AQADSLTVYL (659 aa)) lie on the Extracellular side of the membrane. 5 Cadherin domains span residues 35 to 133 (IPEE…SPEF), 138 to 242 (MLLK…APEF), 247 to 346 (YEVQ…APEL), 351 to 450 (LSSP…APAF), and 455 to 560 (YTLF…SPFV). Asn-169 carries N-linked (GlcNAc...) asparagine glycosylation. Lys-296 is subject to N6-acetyllysine. Residues Asn-417 and Asn-435 are each glycosylated (N-linked (GlcNAc...) asparagine). An N-linked (GlcNAc...) asparagine glycan is attached at Asn-566. The Cadherin 6 domain maps to 567–670 (GSAPCTELVP…LVDGFSQPYL (104 aa)). The helical transmembrane segment at 690–710 (VVALASVSSLFLFSVLLFVAV) threads the bilayer. The Cytoplasmic segment spans residues 711-795 (RLCRRSRAAP…AAFRNSFGLN (85 aa)).

The protein localises to the cell membrane. In terms of biological role, potential calcium-dependent cell-adhesion protein. May be involved in the establishment and maintenance of specific neuronal connections in the brain. This Pan troglodytes (Chimpanzee) protein is Protocadherin beta-5 (PCDHB5).